Reading from the N-terminus, the 75-residue chain is Putative antitoxin PH1062.1 (75 aa).

This sequence belongs to the UPF0330 family.

Possibly the antitoxin component of a type II toxin-antitoxin (TA) system. This chain is Putative antitoxin PH1062.1, found in Pyrococcus horikoshii (strain ATCC 700860 / DSM 12428 / JCM 9974 / NBRC 100139 / OT-3).